The sequence spans 428 residues: Putative aspergillopepsin A-like aspartic endopeptidase AFUA_2G15950 (428 aa).

An N-terminal signal peptide occupies residues 1–19 (MHSLQSFLFLLLLGYGVFA). A propeptide spans 20–90 (APTSPQAQSQ…GTAANLVTDV (71 aa)) (activation peptide). In terms of domain architecture, Peptidase A1 spans 110–425 (FVSPVTIGGQ…DLRGPSIGLA (316 aa)). Aspartate 126 is an active-site residue. N-linked (GlcNAc...) asparagine glycosylation is present at asparagine 276. The active site involves aspartate 312. N-linked (GlcNAc...) asparagine glycosylation occurs at asparagine 380.

Belongs to the peptidase A1 family.

The protein localises to the secreted. The protein is Putative aspergillopepsin A-like aspartic endopeptidase AFUA_2G15950 of Aspergillus fumigatus (strain ATCC MYA-4609 / CBS 101355 / FGSC A1100 / Af293) (Neosartorya fumigata).